The sequence spans 699 residues: Elongation factor G (699 aa).

In terms of domain architecture, tr-type G spans 8–288 (EDYRNFGIMA…AVVDYLPSPL (281 aa)). GTP is bound by residues 17-24 (AHIDAGKT), 86-90 (DTPGH), and 140-143 (NKMD).

Belongs to the TRAFAC class translation factor GTPase superfamily. Classic translation factor GTPase family. EF-G/EF-2 subfamily.

It is found in the cytoplasm. Its function is as follows. Catalyzes the GTP-dependent ribosomal translocation step during translation elongation. During this step, the ribosome changes from the pre-translocational (PRE) to the post-translocational (POST) state as the newly formed A-site-bound peptidyl-tRNA and P-site-bound deacylated tRNA move to the P and E sites, respectively. Catalyzes the coordinated movement of the two tRNA molecules, the mRNA and conformational changes in the ribosome. This chain is Elongation factor G, found in Rhizobium rhizogenes (strain K84 / ATCC BAA-868) (Agrobacterium radiobacter).